Consider the following 290-residue polypeptide: Ribosomal RNA small subunit methyltransferase A (290 aa).

S-adenosyl-L-methionine contacts are provided by asparagine 27, leucine 29, glycine 54, glutamate 75, aspartate 100, and asparagine 125.

Belongs to the class I-like SAM-binding methyltransferase superfamily. rRNA adenine N(6)-methyltransferase family. RsmA subfamily.

The protein resides in the cytoplasm. It catalyses the reaction adenosine(1518)/adenosine(1519) in 16S rRNA + 4 S-adenosyl-L-methionine = N(6)-dimethyladenosine(1518)/N(6)-dimethyladenosine(1519) in 16S rRNA + 4 S-adenosyl-L-homocysteine + 4 H(+). In terms of biological role, specifically dimethylates two adjacent adenosines (A1518 and A1519) in the loop of a conserved hairpin near the 3'-end of 16S rRNA in the 30S particle. May play a critical role in biogenesis of 30S subunits. The protein is Ribosomal RNA small subunit methyltransferase A of Streptococcus agalactiae serotype V (strain ATCC BAA-611 / 2603 V/R).